Consider the following 87-residue polypeptide: Putative defensin-like protein 238 (87 aa).

The first 23 residues, 1–23 (MRSITWFIVFCVFMFIALNHVKG), serve as a signal peptide directing secretion. 4 disulfide bridges follow: Cys30-Cys87, Cys40-Cys65, Cys48-Cys78, and Cys63-Cys80.

The protein belongs to the DEFL family.

The protein localises to the secreted. This Arabidopsis thaliana (Mouse-ear cress) protein is Putative defensin-like protein 238 (SCRL16).